A 609-amino-acid polypeptide reads, in one-letter code: UvrABC system protein C (609 aa).

The region spanning 16–94 (HLPGVYRHLD…IKSLRPRYNI (79 aa)) is the GIY-YIG domain. The region spanning 203–238 (REVMDEIEARMLQASTELRFEEAAVLRDQMGSLSKV) is the UVR domain.

The protein belongs to the UvrC family. As to quaternary structure, interacts with UvrB in an incision complex.

It localises to the cytoplasm. Functionally, the UvrABC repair system catalyzes the recognition and processing of DNA lesions. UvrC both incises the 5' and 3' sides of the lesion. The N-terminal half is responsible for the 3' incision and the C-terminal half is responsible for the 5' incision. The polypeptide is UvrABC system protein C (Bordetella pertussis (strain Tohama I / ATCC BAA-589 / NCTC 13251)).